The chain runs to 481 residues: Aspartyl/glutamyl-tRNA(Asn/Gln) amidotransferase subunit B (481 aa).

This sequence belongs to the GatB/GatE family. GatB subfamily. As to quaternary structure, heterotrimer of A, B and C subunits.

The catalysed reaction is L-glutamyl-tRNA(Gln) + L-glutamine + ATP + H2O = L-glutaminyl-tRNA(Gln) + L-glutamate + ADP + phosphate + H(+). The enzyme catalyses L-aspartyl-tRNA(Asn) + L-glutamine + ATP + H2O = L-asparaginyl-tRNA(Asn) + L-glutamate + ADP + phosphate + 2 H(+). In terms of biological role, allows the formation of correctly charged Asn-tRNA(Asn) or Gln-tRNA(Gln) through the transamidation of misacylated Asp-tRNA(Asn) or Glu-tRNA(Gln) in organisms which lack either or both of asparaginyl-tRNA or glutaminyl-tRNA synthetases. The reaction takes place in the presence of glutamine and ATP through an activated phospho-Asp-tRNA(Asn) or phospho-Glu-tRNA(Gln). In Ectopseudomonas mendocina (strain ymp) (Pseudomonas mendocina), this protein is Aspartyl/glutamyl-tRNA(Asn/Gln) amidotransferase subunit B.